A 513-amino-acid polypeptide reads, in one-letter code: Teichoic acid ribitol-phosphate polymerase TarK (513 aa).

This sequence belongs to the CDP-glycerol glycerophosphotransferase family.

The protein localises to the cell membrane. The catalysed reaction is 4-O-[di(2R)-glycerylphospho]-N-acetyl-beta-D-mannosaminyl-(1-&gt;4)-N-acetyl-alpha-D-glucosaminyl di-trans,octa-cis-undecaprenyl diphosphate + n CDP-L-ribitol = 4-O-[(D-ribitylphospho)(n)-di{(2R)-glycerylphospho}]-N-acetyl-beta-D-mannosaminyl-(1-&gt;4)-N-acetyl-alpha-D-glucosaminyl di-trans,octa-cis-undecaprenyl diphosphate + n CMP + n H(+). Its pathway is cell wall biogenesis; poly(ribitol phosphate) teichoic acid biosynthesis. Can catalyze the polymerization of the main chain of the major teichoic acid by sequential transfer of ribitol phosphate units from CDP-ribitol to the second glycerol phosphate attached to the disaccharide linkage unit. This Staphylococcus aureus (strain NCTC 8325 / PS 47) protein is Teichoic acid ribitol-phosphate polymerase TarK (tarK).